A 443-amino-acid polypeptide reads, in one-letter code: Ribulose bisphosphate carboxylase large chain (443 aa).

Lys-7 carries the post-translational modification N6,N6,N6-trimethyllysine. 2 residues coordinate substrate: Asn-116 and Thr-166. Catalysis depends on Lys-168, which acts as the Proton acceptor. Lys-170 is a binding site for substrate. The Mg(2+) site is built by Lys-194, Asp-196, and Glu-197. Lys-194 bears the N6-carboxylysine mark. His-287 serves as the catalytic Proton acceptor. Residues Arg-288, His-320, and Ser-372 each coordinate substrate.

The protein belongs to the RuBisCO large chain family. Type I subfamily. In terms of assembly, heterohexadecamer of 8 large chains and 8 small chains; disulfide-linked. The disulfide link is formed within the large subunit homodimers. The cofactor is Mg(2+). The disulfide bond which can form in the large chain dimeric partners within the hexadecamer appears to be associated with oxidative stress and protein turnover.

It is found in the plastid. The protein resides in the chloroplast. It carries out the reaction 2 (2R)-3-phosphoglycerate + 2 H(+) = D-ribulose 1,5-bisphosphate + CO2 + H2O. The enzyme catalyses D-ribulose 1,5-bisphosphate + O2 = 2-phosphoglycolate + (2R)-3-phosphoglycerate + 2 H(+). Functionally, ruBisCO catalyzes two reactions: the carboxylation of D-ribulose 1,5-bisphosphate, the primary event in carbon dioxide fixation, as well as the oxidative fragmentation of the pentose substrate in the photorespiration process. Both reactions occur simultaneously and in competition at the same active site. The polypeptide is Ribulose bisphosphate carboxylase large chain (Abies sachalinensis (Sakhalin fir)).